Reading from the N-terminus, the 1017-residue chain is Integrator complex subunit 3 (1017 aa).

The tract at residues 952-1017 (EYEDSSKPPK…KGSAVGSDSD (66 aa)) is disordered. The segment covering 983–997 (NEEESVSSSASEEED) has biased composition (acidic residues).

Belongs to the Integrator subunit 3 family. As to quaternary structure, component of the Integrator complex, composed of core subunits INTS1, INTS2, INTS3, INTS4, INTS5, INTS6, INTS7, INTS8, INTS9/RC74, INTS10, INTS11/CPSF3L, INTS12, INTS13, INTS14 and INTS15. The core complex associates with protein phosphatase 2A subunits PPP2CA and PPP2R1A, to form the Integrator-PP2A (INTAC) complex. Component of the SOSS complex.

Its subcellular location is the nucleus. It localises to the cytoplasm. Functionally, component of the integrator complex, a multiprotein complex that terminates RNA polymerase II (Pol II) transcription in the promoter-proximal region of genes. The integrator complex provides a quality checkpoint during transcription elongation by driving premature transcription termination of transcripts that are unfavorably configured for transcriptional elongation: the complex terminates transcription by (1) catalyzing dephosphorylation of the C-terminal domain (CTD) of Pol II subunit POLR2A/RPB1 and SUPT5H/SPT5, (2) degrading the exiting nascent RNA transcript via endonuclease activity and (3) promoting the release of Pol II from bound DNA. The integrator complex is also involved in terminating the synthesis of non-coding Pol II transcripts, such as enhancer RNAs (eRNAs), small nuclear RNAs (snRNAs), telomerase RNAs and long non-coding RNAs (lncRNAs). Within the integrator complex, INTS3 is involved in the post-termination step: INTS3 binds INTS7 in the open conformation of integrator complex and prevents the rebinding of Pol II to the integrator after termination cycle. Component of the SOSS complex, a multiprotein complex that functions downstream of the MRN complex to promote DNA repair and G2/M checkpoint. The SOSS complex associates with single-stranded DNA at DNA lesions and influences diverse endpoints in the cellular DNA damage response including cell-cycle checkpoint activation, recombinational repair and maintenance of genomic stability. The SOSS complex is required for efficient homologous recombination-dependent repair of double-strand breaks (DSBs) and ATM-dependent signaling pathways. In the SOSS complex, it is required for the assembly of the complex and for stabilization of the complex at DNA damage sites. The chain is Integrator complex subunit 3 (ints3) from Danio rerio (Zebrafish).